The following is a 425-amino-acid chain: UPF0597 protein KPN78578_43500 (425 aa).

It belongs to the UPF0597 family.

This chain is UPF0597 protein KPN78578_43500, found in Klebsiella pneumoniae subsp. pneumoniae (strain ATCC 700721 / MGH 78578).